A 488-amino-acid polypeptide reads, in one-letter code: Cysteine--tRNA ligase (488 aa).

Residue Cys40 coordinates Zn(2+). The 'HIGH' region signature appears at 42–52 (MTVYDYCHIGH). 3 residues coordinate Zn(2+): Cys221, His246, and Glu250. Residues 278–282 (KMSKS) carry the 'KMSKS' region motif. Lys281 provides a ligand contact to ATP.

It belongs to the class-I aminoacyl-tRNA synthetase family. Monomer. Requires Zn(2+) as cofactor.

It is found in the cytoplasm. It carries out the reaction tRNA(Cys) + L-cysteine + ATP = L-cysteinyl-tRNA(Cys) + AMP + diphosphate. The polypeptide is Cysteine--tRNA ligase (Psychrobacter cryohalolentis (strain ATCC BAA-1226 / DSM 17306 / VKM B-2378 / K5)).